The chain runs to 223 residues: DNA mismatch repair protein MutH (223 aa).

The protein belongs to the MutH family.

The protein localises to the cytoplasm. In terms of biological role, sequence-specific endonuclease that cleaves unmethylated GATC sequences. It is involved in DNA mismatch repair. The polypeptide is DNA mismatch repair protein MutH (Haemophilus influenzae (strain ATCC 51907 / DSM 11121 / KW20 / Rd)).